Here is a 404-residue protein sequence, read N- to C-terminus: Protrudin (404 aa).

The segment at 1–20 (MQTSEREGCGPEVSPSTVPE) is disordered. Over 1–66 (MQTSEREGCG…AGDGVRYLLR (66 aa)) the chain is Cytoplasmic. The sufficient for homooligomerization stretch occupies residues 1–92 (MQTSEREGCG…LFLTLNEGAW (92 aa)). The interval 1–205 (MQTSEREGCG…LYLLPLCWVL (205 aa)) is sufficient for localization to endoplasmic reticulum tubular network and for interactions with REEP1, REEP5, ATL1, ATL2, ATL3 and SPAST. A necessary for interaction with RAB11A and function in neurite outgrowth region spans residues 51–64 (LEPLKDAGDGVRYL). The chain crosses the membrane as a helical span at residues 67-87 (WQTPLCSLLTCLGLNVLFLTL). Asparagine 88 is a topological domain (lumenal). The helical transmembrane segment at 89–109 (EGAWYSVGALMISVPALLGYL) threads the bilayer. The Cytoplasmic segment spans residues 110–187 (QEGCQARLSE…NPAVSSQFYG (78 aa)). The helical intramembrane region spans 188 to 208 (ALLGTVCMLYLLPLCWVLALL). Residues 209–404 (NSTLFLGNVE…CASCNQTLSK (196 aa)) lie on the Cytoplasmic side of the membrane. Residues 234–286 (MNPKQEESAFESPPPSDAGGKGALVDCTPAPTPTEDLTPGSVEEAEEAEPDEE) form a disordered region. The necessary for interaction with KIF5A stretch occupies residues 271 to 354 (TPGSVEEAEE…GCSATFSVLK (84 aa)). Residues 276 to 286 (EEAEEAEPDEE) show a composition bias toward acidic residues. The tract at residues 286-292 (EFKDAIE) is necessary for interaction with VAPA. The FYVE-type zinc finger occupies 337 to 403 (TNNYGSCTGC…VCASCNQTLS (67 aa)). Residues cysteine 343, cysteine 346, cysteine 359, cysteine 362, cysteine 367, cysteine 370, cysteine 395, and cysteine 398 each contribute to the Zn(2+) site.

Can form homooligomers (monomers, dimers and tetramers). Interacts with RAB11A (GDP-bound form); regulates RAB11A. Interacts with FKBP8; may negatively regulate ZFYVE27 phosphorylation. Interacts with VAPA (via MSP domain); may regulate ZFYVE27 retention in the endoplasmic reticulum and its function in cell projections formation. Interacts with VAPB (via MSP domain). Interacts with RAB11B (GDP-bound form), REEP1, REEP5, ATL1, ATL2, ATL3, SPAST, SURF4, KIF5A, KIF5B, KIF5C and RTN3. In terms of processing, phosphorylated. Phosphorylation is induced by NGF through the MAPK/ERK pathway and modulates interaction with RAB11A.

The protein localises to the recycling endosome membrane. The protein resides in the endoplasmic reticulum membrane. It localises to the cell projection. It is found in the growth cone membrane. In terms of biological role, key regulator of RAB11-dependent vesicular trafficking during neurite extension through polarized membrane transport. Promotes axonal elongation and contributes to the establishment of neuronal cell polarity. Involved in nerve growth factor-induced neurite formation in VAPA-dependent manner. Contributes to both the formation and stabilization of the tubular ER network. Involved in ER morphogenesis by regulating the sheet-to-tubule balance and possibly the density of tubule interconnections. Acts as an adapter protein that facilitates the interaction of KIF5A with VAPA, VAPB, SURF4, RAB11A, RAB11B and RTN3 and the ZFYVE27-KIF5A complex contributes to the transport of these proteins in neurons. Can induce formation of neurite-like membrane protrusions in non-neuronal cells in a KIF5A/B-dependent manner. This Bos taurus (Bovine) protein is Protrudin (ZFYVE27).